The chain runs to 312 residues: Pantothenate kinase (312 aa).

An ATP-binding site is contributed by 97–104; it reads GSVAVGKS.

This sequence belongs to the prokaryotic pantothenate kinase family.

The protein resides in the cytoplasm. It carries out the reaction (R)-pantothenate + ATP = (R)-4'-phosphopantothenate + ADP + H(+). Its pathway is cofactor biosynthesis; coenzyme A biosynthesis; CoA from (R)-pantothenate: step 1/5. In Mycolicibacterium paratuberculosis (strain ATCC BAA-968 / K-10) (Mycobacterium paratuberculosis), this protein is Pantothenate kinase.